A 370-amino-acid polypeptide reads, in one-letter code: Alanine racemase (370 aa).

Lysine 39 functions as the Proton acceptor; specific for D-alanine in the catalytic mechanism. Lysine 39 carries the N6-(pyridoxal phosphate)lysine modification. Arginine 137 provides a ligand contact to substrate. Tyrosine 258 acts as the Proton acceptor; specific for L-alanine in catalysis. Position 306 (methionine 306) interacts with substrate.

The protein belongs to the alanine racemase family. Pyridoxal 5'-phosphate is required as a cofactor.

The catalysed reaction is L-alanine = D-alanine. It participates in amino-acid biosynthesis; D-alanine biosynthesis; D-alanine from L-alanine: step 1/1. Catalyzes the interconversion of L-alanine and D-alanine. May also act on other amino acids. This is Alanine racemase (alr) from Methylobacterium nodulans (strain LMG 21967 / CNCM I-2342 / ORS 2060).